The sequence spans 104 residues: Flagellar hook-basal body complex protein FliE (104 aa).

It belongs to the FliE family.

Its subcellular location is the bacterial flagellum basal body. This chain is Flagellar hook-basal body complex protein FliE, found in Escherichia fergusonii (strain ATCC 35469 / DSM 13698 / CCUG 18766 / IAM 14443 / JCM 21226 / LMG 7866 / NBRC 102419 / NCTC 12128 / CDC 0568-73).